Consider the following 1313-residue polypeptide: MKHFMMPRNAILRDIGESQSPNPSLTKSKSQRKIKSSKENAPPPDLNSLIPDHRSSPAKLKSPLPPRPPSSNPLKRKLIAEATADNGVAIGVSDSGVKVIVRMKPPSKGEEEEMIVKKISNDALTINEQTFTFDSIADPESTQDEIFQLVGAPLVENCLAGFNSSVFAYGQTGSGKTYTMWGPANGLLEEHLSGDQRGLTPRVFELLFARLSEEQAKHAERQLKYQCRCSFLEIYNEQITDLLDPSLKNLMIREDVKSGVYVENLTEEYVKNLKDLSKLLVKGLANRRTGATSVNAESSRSHCVFTCVVESHCKSVADGLSSFKTSRINLVDLAGSERQKLTGAAGDRLKEAGNINRSLSQLGNLINILAEISQTGKQRHIPYRDSRLTFLLQESLGGNAKLAMVCAVSPSQSCRSETFSTLRFAQRAKAIQNKAIVNEVMQDDVNFLREVIRQLRDELQRVKDDKGNNPTNPNAAYTTSWNARRSLSLLRSFGLGHPKSLPNGDDDGDTEMEIDEEAVERLCAQMGLSPPAEDNNQEMSRVEKINSSLQTVVLKDESYNNSHLKSSEATDVNMEDACCQTENNGSETDNALTVAETMDDGSSVQPDSITNSLHSCISDTNQGNSPSKAENIPSCQDLVIEADVSAIVSVADTSNNTEQVSVNPVSPCLSVAPVSVSPVLIPPTESASPKIRNSRKSLRTTSMSTASQKDIERANQLTPEVVEPSPAMSTEVLNLYSALSTKKSEAFPVPTRQLAASLHRGMKLLDSYRQSTALRRSTFRLSYKALECKPSTVLSKADVGVQTYPQADEIAEDNSKEVLCSRCKCRAECDAQEISDTSNLQLVPIDNSEGSEKSNFQVPKAVEKVLAGSIRREMAMEEFCTKQASEISQLNRLVQQYKHERECNAIIGQTREDKIVRLESLMDGVLSKDDFLDEEFASLMHEHKLLKDMYENHPEVLQTRIELKRVQEELESFKNFYGDMGEREVLLEEIHDLKAQLQCYTDSSLTSARRRGSLLKLTYACDPNQAPQLNTIPESVDEGPEKTLEQERLRWTEAESNWISLAEELRTELDTNRLLMEKQKRELDTEKRCAEELTEAMQMAMQGHARMIEQYADLEEKHIQLLARHRRIREGIDDVKKAAARAGVKGAESRFINALAAEISALKVQREKEVRYFRDENKSLQSQLRDTAEAVQAAGELLVRFKEAEEGLTFAQKRAMDAEYEASEAYKKVDKLKRKYETEISTVNQQHNAEPQNPIESLQASCNDDAMAKYDEPSASDGDNQWREEFQPFYKKDEELSKLAEPSWFSGYDRCNI.

Positions 1–74 (MKHFMMPRNA…PPRPPSSNPL (74 aa)) are disordered. Residues 17-26 (ESQSPNPSLT) show a composition bias toward polar residues. Residues 96–431 (GVKVIVRMKP…LRFAQRAKAI (336 aa)) enclose the Kinesin motor domain. Position 170–177 (170–177 (GQTGSGKT)) interacts with ATP. 3 microtubules-binding regions span residues 298 to 302 (SSRSH), 331 to 337 (VDLAGSE), and 380 to 384 (HIPYR). The tract at residues 429-467 (KAIQNKAIVNEVMQDDVNFLREVIRQLRDELQRVKDDKG) is neck. Residues 685 to 709 (ESASPKIRNSRKSLRTTSMSTASQK) are disordered. Positions 699-708 (RTTSMSTASQ) are enriched in polar residues. 3 coiled-coil regions span residues 932-1003 (LDEE…YTDS), 1062-1130 (AEEL…RIRE), and 1167-1241 (EKEV…TEIS).

The protein belongs to the TRAFAC class myosin-kinesin ATPase superfamily. Kinesin family. KIN-12 subfamily. In terms of assembly, homodimer and heterodimer with KIN12A. Interacts with TIO.

It localises to the cytoplasm. Its subcellular location is the cytoskeleton. The protein resides in the phragmoplast. In terms of biological role, plus-end directed kinesin-like motor enzyme that plays a critical role in the organization of phragmoplast microtubules during cytokinesis. Constitutes a signaling module in association with serine/threonine-protein kinase TIO that is required to support phragmoplast expansion and cell-plate growth in plant cells. The polypeptide is Kinesin-like protein KIN-12B (Arabidopsis thaliana (Mouse-ear cress)).